Reading from the N-terminus, the 139-residue chain is MKRTGLLNSELSYIISKLGHFDALTVCDAGLPIPEGVQRIDLAVSEGIPSFIDVVKAVLMEMELESVELAEEFKDVSSDRHDELISVLEMESAQRGKDIPVDYVRHVNFKLNTKKSVAIVRTGEFTPYANITFKAGVVF.

His20 (proton donor) is an active-site residue. Substrate contacts are provided by residues Asp28, His106, and 128–130 (YAN).

It belongs to the RbsD / FucU family. RbsD subfamily. In terms of assembly, homodecamer.

The protein resides in the cytoplasm. It catalyses the reaction beta-D-ribopyranose = beta-D-ribofuranose. Its pathway is carbohydrate metabolism; D-ribose degradation; D-ribose 5-phosphate from beta-D-ribopyranose: step 1/2. Catalyzes the interconversion of beta-pyran and beta-furan forms of D-ribose. The chain is D-ribose pyranase from Maridesulfovibrio salexigens (strain ATCC 14822 / DSM 2638 / NCIMB 8403 / VKM B-1763) (Desulfovibrio salexigens).